The following is a 100-amino-acid chain: Elastin (100 aa).

4-hydroxyproline is present on residues P72 and P86. The cysteines at positions 90 and 95 are disulfide-linked.

It belongs to the elastin family. In terms of assembly, the polymeric elastin chains are cross-linked together into an extensible 3D network. Forms a ternary complex with BGN and MFAP2. Interacts with MFAP2 via divalent cations (calcium &gt; magnesium &gt; manganese) in a dose-dependent and saturating manner. Interacts with FBLN5 and FBN1. Forms a ternary complex with FBN1 and FBLN2 or FBLN5. Interacts with MFAP4 in a Ca (2+)-dependent manner; this interaction promotes ELN self-assembly. Interacts with EFEMP2 with moderate affinity. Elastin is formed through the cross-linking of its soluble precursor tropoelastin. Cross-linking is initiated through the action of lysyl oxidase on exposed lysines to form allysine. Subsequent spontaneous condensation reactions with other allysine or unmodified lysine residues result in various bi-, tri-, and tetrafunctional cross-links. The most abundant cross-links in mature elastin fibers are lysinonorleucine, allysine aldol, desmosine, and isodesmosine. Post-translationally, hydroxylation on proline residues within the sequence motif, GXPG, is most likely to be 4-hydroxy as this fits the requirement for 4-hydroxylation in vertebrates.

The protein localises to the secreted. It is found in the extracellular space. Its subcellular location is the extracellular matrix. Major structural protein of tissues such as aorta and nuchal ligament, which must expand rapidly and recover completely. Molecular determinant of the late arterial morphogenesis, stabilizing arterial structure by regulating proliferation and organization of vascular smooth muscle. The sequence is that of Elastin (ELN) from Ovis aries (Sheep).